A 248-amino-acid polypeptide reads, in one-letter code: ATP synthase subunit a (248 aa).

7 helical membrane passes run 29-49 (AMLTTCVSLSFFLFLFYCLFS), 85-105 (VFPFLFVIFSFILISNVQGLV), 115-135 (LIQTMVLALTVFIGVIIIVLA), 143-163 (LFLPGGTSIVLAFLLVPIEIV), 176-196 (LFANMMAGHTLLKVIAAVAWA), 201-221 (GGLLLIAHIVPLGVLVILFGL), and 227-247 (LIQAYVFTILSCIYINDAIVL).

This sequence belongs to the ATPase A chain family. F-type ATPases have 2 components, CF(1) - the catalytic core - and CF(0) - the membrane proton channel. CF(1) has five subunits: alpha(3), beta(3), gamma(1), delta(1), epsilon(1). CF(0) has three main subunits: a, b and c.

The protein resides in the mitochondrion inner membrane. Mitochondrial membrane ATP synthase (F(1)F(0) ATP synthase or Complex V) produces ATP from ADP in the presence of a proton gradient across the membrane which is generated by electron transport complexes of the respiratory chain. F-type ATPases consist of two structural domains, F(1) - containing the extramembraneous catalytic core and F(0) - containing the membrane proton channel, linked together by a central stalk and a peripheral stalk. During catalysis, ATP synthesis in the catalytic domain of F(1) is coupled via a rotary mechanism of the central stalk subunits to proton translocation. Key component of the proton channel; it may play a direct role in the translocation of protons across the membrane. The chain is ATP synthase subunit a (ATP6) from Pylaiella littoralis (Seaweed).